The primary structure comprises 154 residues: CASP-like protein 5C2 (154 aa).

The Cytoplasmic segment spans residues 1 to 17 (MEHVPGSFGTSASFALR). A helical transmembrane segment spans residues 18–38 (FGQTIFSAASLIFMCFDFDFY). The Extracellular segment spans residues 39 to 41 (DFT). The chain crosses the membrane as a helical span at residues 42–62 (TFCYLAMVMAIVTPWSILLAL). At 63–81 (TDTYSVLVKLLPQELRVLS) the chain is on the cytoplasmic side. A helical transmembrane segment spans residues 82–102 (IVFAGDFVLSFLSLGGACAVA). Over 103–128 (SATELLASADGKICDGSLCIQYQVSA) the chain is Extracellular. Residues 129–149 (ALAFLCWFLLLASALFNFWSL) traverse the membrane as a helical segment. Over 150 to 154 (PSLYY) the chain is Cytoplasmic.

It belongs to the Casparian strip membrane proteins (CASP) family. Homodimer and heterodimers.

It is found in the cell membrane. This Arabidopsis thaliana (Mouse-ear cress) protein is CASP-like protein 5C2.